The sequence spans 311 residues: Meiotically up-regulated gene 146 protein (311 aa).

It localises to the cytoplasm. The protein localises to the nucleus. Its function is as follows. Has a role in sporulation. The protein is Meiotically up-regulated gene 146 protein (mug146) of Schizosaccharomyces pombe (strain 972 / ATCC 24843) (Fission yeast).